A 737-amino-acid polypeptide reads, in one-letter code: Transcription termination factor Rho (737 aa).

Residues 1–396 form a disordered region; it reads MSGPCSAHRV…ENSYLPDPTD (396 aa). 3 stretches are compositionally biased toward low complexity: residues 16–28, 62–86, and 101–111; these read RPTI…TRSS, ASRA…GSDA, and DAESAPTAADT. Composition is skewed to basic and acidic residues over residues 145–175, 196–256, 266–279, and 286–324; these read PRAE…HESR, SMER…DRRD, GRPD…DRHQ, and DRSH…DRGG. A compositionally biased stretch (basic residues) spans 328 to 339; that stretch reads RNGRRGRNRFRR. Over residues 347–360 the composition is skewed to polar residues; that stretch reads APISGSHAPSQGSP. In terms of domain architecture, Rho RNA-BD spans 367–439; the sequence is EGTMAGWFDP…IEVQTLNDGS (73 aa). Residues 376–387 show a composition bias toward basic and acidic residues; that stretch reads PSRDGGFLRRPE. Residues 487–492, 499–504, and R530 contribute to the ATP site; these read GYGQRA and RAGKTT.

It belongs to the Rho family. Homohexamer. The homohexamer assembles into an open ring structure.

Facilitates transcription termination by a mechanism that involves Rho binding to the nascent RNA, activation of Rho's RNA-dependent ATPase activity, and release of the mRNA from the DNA template. In Gemmatimonas aurantiaca (strain DSM 14586 / JCM 11422 / NBRC 100505 / T-27), this protein is Transcription termination factor Rho.